Reading from the N-terminus, the 105-residue chain is MKEAVKMSCLCIFVFLFLFSLTDAIKCIKCGESGLFGTEDCVTGTFEAEECGPNDQYCTKIILNDGTRTTAQRGCSVGHVPESNQKDGKVSTHMSSCNTDGCNAN.

Positions 1-24 (MKEAVKMSCLCIFVFLFLFSLTDA) are cleaved as a signal peptide. Residues 79–105 (HVPESNQKDGKVSTHMSSCNTDGCNAN) form a disordered region. Residues 92 to 105 (THMSSCNTDGCNAN) are compositionally biased toward polar residues.

This sequence belongs to the scoloptoxin-05 family. In terms of processing, contains 4 disulfide bonds. In terms of tissue distribution, expressed by the venom gland.

The protein localises to the secreted. In Scolopendra dehaani (Thai centipede), this protein is U-scoloptoxin(05)-Ssd1a.